The chain runs to 113 residues: Con-Ins G3 (113 aa).

Residues 1 to 21 (MTTSFYFLLVALGLLLYVCQS) form the signal peptide. The propeptide occupies 22–29 (SFGNQHTR). Pro34 is modified (4-hydroxyproline; partial). Cystine bridges form between Cys38–Cys99, Cys50–Cys112, and Cys98–Cys103. A 4-carboxyglutamate modification is found at Glu41. Residue His51 is modified to Histidine amide. A propeptide spans 52 to 92 (GKRNDAGKKRGRASPLWQRQGFLSMLKAKRNEAFFLQRDGR) (c peptide). Glu96 is subject to 4-carboxyglutamate. At Pro102 the chain carries 4-hydroxyproline; partial.

Belongs to the insulin family. Heterodimer of A and B chains; disulfide-linked. It is noteworthy that in this dimer, in contrast to Con-Ins G1, the chain B is amidated and not the chain A. In terms of tissue distribution, expressed by the venom gland.

It localises to the secreted. Functionally, this venom insulin, from a fish-hunting cone snail, facilitates prey capture by rapidly inducing hypoglycemic shock. It is one of the smallest known insulin found in nature and lacks the C-terminal segment of the B chain that, in human insulin, mediates engagement of the insulin receptor (INSR) and assembly of the hormone's hexameric storage form. Despite lacking this segment, it both binds and activates human insulin receptor (long isoform (HIR-B)) with a high potency (EC(50)=242 nM). In vivo, intraperitoneal injection of this peptide into zebrafish lowers blood glucose with a lower potency than human insulin. In addition, when applied to water, this peptide reduces overall locomotor activity of zebrafish larvae, observed as a significant decrease in the percentage of time spent swimming and movement frequency. When tested on a mouse model of diabetes, this insulin also lowers blood glucose with a 10-fold lower potency than human insulin. This Conus geographus (Geography cone) protein is Con-Ins G3.